Here is a 334-residue protein sequence, read N- to C-terminus: Protein-methionine-sulfoxide reductase catalytic subunit MsrP (334 aa).

Residues 1-44 (MKAVNPLTENDVTPESLFNARRRTVLKMLGMSAAALSLPGAARA) constitute a signal peptide (tat-type signal). Mo-molybdopterin-binding positions include N88, 91–92 (YE), C146, T181, N233, R238, and 249–251 (GIK).

The protein belongs to the MsrP family. Heterodimer of a catalytic subunit (MsrP) and a heme-binding subunit (MsrQ). Mo-molybdopterin serves as cofactor. Predicted to be exported by the Tat system. The position of the signal peptide cleavage has not been experimentally proven.

The protein resides in the periplasm. It catalyses the reaction L-methionyl-[protein] + a quinone + H2O = L-methionyl-(S)-S-oxide-[protein] + a quinol. The catalysed reaction is L-methionyl-[protein] + a quinone + H2O = L-methionyl-(R)-S-oxide-[protein] + a quinol. Its function is as follows. Part of the MsrPQ system that repairs oxidized periplasmic proteins containing methionine sulfoxide residues (Met-O), using respiratory chain electrons. Thus protects these proteins from oxidative-stress damage caused by reactive species of oxygen and chlorine generated by the host defense mechanisms. MsrPQ is essential for the maintenance of envelope integrity under bleach stress, rescuing a wide series of structurally unrelated periplasmic proteins from methionine oxidation. The catalytic subunit MsrP is non-stereospecific, being able to reduce both (R-) and (S-) diastereoisomers of methionine sulfoxide. The sequence is that of Protein-methionine-sulfoxide reductase catalytic subunit MsrP from Erwinia tasmaniensis (strain DSM 17950 / CFBP 7177 / CIP 109463 / NCPPB 4357 / Et1/99).